Consider the following 209-residue polypeptide: Pyridoxine/pyridoxamine 5'-phosphate oxidase (209 aa).

Substrate-binding positions include 2–5 and Lys66; that span reads RVEY. FMN-binding positions include 61–66, 76–77, Lys83, and Gln105; these read RTVLCK and FT. Positions 123, 127, and 131 each coordinate substrate. FMN contacts are provided by residues 140–141 and Trp186; that span reads QS. 192–194 lines the substrate pocket; sequence RVH. An FMN-binding site is contributed by Arg196.

Belongs to the pyridoxamine 5'-phosphate oxidase family. Homodimer. The cofactor is FMN.

It carries out the reaction pyridoxamine 5'-phosphate + O2 + H2O = pyridoxal 5'-phosphate + H2O2 + NH4(+). The catalysed reaction is pyridoxine 5'-phosphate + O2 = pyridoxal 5'-phosphate + H2O2. It functions in the pathway cofactor metabolism; pyridoxal 5'-phosphate salvage; pyridoxal 5'-phosphate from pyridoxamine 5'-phosphate: step 1/1. The protein operates within cofactor metabolism; pyridoxal 5'-phosphate salvage; pyridoxal 5'-phosphate from pyridoxine 5'-phosphate: step 1/1. Catalyzes the oxidation of either pyridoxine 5'-phosphate (PNP) or pyridoxamine 5'-phosphate (PMP) into pyridoxal 5'-phosphate (PLP). In Mycobacterium sp. (strain JLS), this protein is Pyridoxine/pyridoxamine 5'-phosphate oxidase.